Here is a 486-residue protein sequence, read N- to C-terminus: Ribulose bisphosphate carboxylase large chain (486 aa).

Residues Asn125 and Thr175 each contribute to the substrate site. The Proton acceptor role is filled by Lys177. Lys179 provides a ligand contact to substrate. The Mg(2+) site is built by Lys203, Asp205, and Glu206. At Lys203 the chain carries N6-carboxylysine. The Proton acceptor role is filled by His295. Positions 296, 328, and 380 each coordinate substrate.

The protein belongs to the RuBisCO large chain family. Type I subfamily. As to quaternary structure, heterohexadecamer of 8 large chains and 8 small chains. The cofactor is Mg(2+).

It catalyses the reaction 2 (2R)-3-phosphoglycerate + 2 H(+) = D-ribulose 1,5-bisphosphate + CO2 + H2O. The enzyme catalyses D-ribulose 1,5-bisphosphate + O2 = 2-phosphoglycolate + (2R)-3-phosphoglycerate + 2 H(+). RuBisCO catalyzes two reactions: the carboxylation of D-ribulose 1,5-bisphosphate, the primary event in carbon dioxide fixation, as well as the oxidative fragmentation of the pentose substrate. Both reactions occur simultaneously and in competition at the same active site. This chain is Ribulose bisphosphate carboxylase large chain, found in Bradyrhizobium diazoefficiens (strain JCM 10833 / BCRC 13528 / IAM 13628 / NBRC 14792 / USDA 110).